The following is a 951-amino-acid chain: Bifunctional glutamine synthetase adenylyltransferase/adenylyl-removing enzyme (951 aa).

The tract at residues 1–440 (MLPLPSELQI…VFDDLIGDET (440 aa)) is adenylyl removase. Residues 449–951 (HGLYKSLWQD…WLAANDANVS (503 aa)) are adenylyl transferase.

This sequence belongs to the GlnE family. Requires Mg(2+) as cofactor.

The catalysed reaction is [glutamine synthetase]-O(4)-(5'-adenylyl)-L-tyrosine + phosphate = [glutamine synthetase]-L-tyrosine + ADP. It catalyses the reaction [glutamine synthetase]-L-tyrosine + ATP = [glutamine synthetase]-O(4)-(5'-adenylyl)-L-tyrosine + diphosphate. Functionally, involved in the regulation of glutamine synthetase GlnA, a key enzyme in the process to assimilate ammonia. When cellular nitrogen levels are high, the C-terminal adenylyl transferase (AT) inactivates GlnA by covalent transfer of an adenylyl group from ATP to specific tyrosine residue of GlnA, thus reducing its activity. Conversely, when nitrogen levels are low, the N-terminal adenylyl removase (AR) activates GlnA by removing the adenylyl group by phosphorolysis, increasing its activity. The regulatory region of GlnE binds the signal transduction protein PII (GlnB) which indicates the nitrogen status of the cell. This Yersinia pseudotuberculosis serotype O:1b (strain IP 31758) protein is Bifunctional glutamine synthetase adenylyltransferase/adenylyl-removing enzyme.